The chain runs to 294 residues: Probable enoyl-CoA hydratase echA12 (294 aa).

This sequence belongs to the enoyl-CoA hydratase/isomerase family.

The catalysed reaction is a (3S)-3-hydroxyacyl-CoA = a (2E)-enoyl-CoA + H2O. It catalyses the reaction a 4-saturated-(3S)-3-hydroxyacyl-CoA = a (3E)-enoyl-CoA + H2O. Functionally, could possibly oxidize fatty acids using specific components. This Mycobacterium leprae (strain TN) protein is Probable enoyl-CoA hydratase echA12 (echA12).